We begin with the raw amino-acid sequence, 354 residues long: DNA polymerase IV (354 aa).

Positions 14-198 constitute a UmuC domain; it reads IIHIDMDAFF…MDIAKFHGVG (185 aa). 2 residues coordinate Mg(2+): Asp18 and Asp116. The active site involves Glu117.

This sequence belongs to the DNA polymerase type-Y family. Monomer. It depends on Mg(2+) as a cofactor.

It localises to the cytoplasm. The catalysed reaction is DNA(n) + a 2'-deoxyribonucleoside 5'-triphosphate = DNA(n+1) + diphosphate. Poorly processive, error-prone DNA polymerase involved in untargeted mutagenesis. Copies undamaged DNA at stalled replication forks, which arise in vivo from mismatched or misaligned primer ends. These misaligned primers can be extended by PolIV. Exhibits no 3'-5' exonuclease (proofreading) activity. May be involved in translesional synthesis, in conjunction with the beta clamp from PolIII. This chain is DNA polymerase IV, found in Streptococcus gordonii (strain Challis / ATCC 35105 / BCRC 15272 / CH1 / DL1 / V288).